The following is a 192-amino-acid chain: Imidazoleglycerol-phosphate dehydratase (192 aa).

Belongs to the imidazoleglycerol-phosphate dehydratase family.

The protein localises to the cytoplasm. The catalysed reaction is D-erythro-1-(imidazol-4-yl)glycerol 3-phosphate = 3-(imidazol-4-yl)-2-oxopropyl phosphate + H2O. The protein operates within amino-acid biosynthesis; L-histidine biosynthesis; L-histidine from 5-phospho-alpha-D-ribose 1-diphosphate: step 6/9. The sequence is that of Imidazoleglycerol-phosphate dehydratase from Methanocella arvoryzae (strain DSM 22066 / NBRC 105507 / MRE50).